The sequence spans 546 residues: Immunoglobulin-like domain-containing receptor 1 (546 aa).

The first 23 residues, 1-23 (MAWPKLPAPWLLLCTWLPAGCLS), serve as a signal peptide directing secretion. In terms of domain architecture, Ig-like V-type spans 24-162 (LLVTVQHTER…TSGDPDKEVK (139 aa)). Topologically, residues 24-167 (LLVTVQHTER…DKEVKLIVLH (144 aa)) are extracellular. A disulfide bond links cysteine 45 and cysteine 145. The helical transmembrane segment at 168–188 (WLTVIFIILGALLLLLLIGVC) threads the bilayer. The Cytoplasmic segment spans residues 189–546 (WCQCCPQYCC…SSHSGRSVVI (358 aa)). Residues 399–546 (WSGRHRSSRL…SSHSGRSVVI (148 aa)) are disordered. Residues 442–457 (RCQERPRRPSPRESTQ) show a composition bias toward basic and acidic residues. Positions 458 to 467 (RHGRRRRHRS) are enriched in basic residues. Serine 499 and serine 501 each carry phosphoserine. Residues 527–539 (GSVERRSEKDSSH) are compositionally biased toward basic and acidic residues.

It belongs to the immunoglobulin superfamily. LISCH7 family. As to quaternary structure, homooligomer. Interacts with MARVELD2 and OCLN; the interaction is required to recruit MARVELD2 to tricellular contacts. Interacts (via C-terminus) with TRA2A, TRA2B and SRSF1. Interacts with PLSCR1. Mainly expressed in prostate and to a lower extent in testis, pancreas, kidney, heart and liver.

It localises to the cell membrane. Its subcellular location is the cell junction. It is found in the tight junction. The protein resides in the cytoplasm. The protein localises to the cytosol. Functionally, maintains epithelial barrier function by recruiting MARVELD2/tricellulin to tricellular tight junctions (tTJs). Crucial for normal hearing by maintaining the structural and functional integrity of tTJs, which are critical for the survival of auditory neurosensory HCs. Mediates fatty acids and lipoproteins-stimulated CCK/cholecystokinin secretion in the small intestine. In the inner ear, may regulate alternative pre-mRNA splicing via binding to TRA2A, TRA2B and SRSF1. Its function is as follows. (Microbial infection) Promotes influenza virus infection by inhibiting viral nucleoprotein NP binding to PLSCR1 and thereby PLSCR1-mediated antiviral activity. In Homo sapiens (Human), this protein is Immunoglobulin-like domain-containing receptor 1.